The sequence spans 154 residues: Ribosome maturation factor RimP (154 aa).

Belongs to the RimP family.

Its subcellular location is the cytoplasm. Required for maturation of 30S ribosomal subunits. The polypeptide is Ribosome maturation factor RimP (Prochlorococcus marinus (strain MIT 9303)).